Here is a 541-residue protein sequence, read N- to C-terminus: Transmembrane protein 151 homolog (541 aa).

A run of 3 helical transmembrane segments spans residues 27–47 (GYGKCLVCSLLLILCFFYATF), 73–93 (YNFVPIVFGLMLYIVYLMECW), and 254–274 (PWFLHPIVFWFFSIFVLSWPL). The interval 503 to 541 (ASISHSSSKDLKSLTLKSSSSNNNNNNSNNNNNDDPEHP) is disordered. Residues 515 to 535 (SLTLKSSSSNNNNNNSNNNNN) show a composition bias toward low complexity.

It belongs to the TMEM151 family.

It localises to the membrane. The protein is Transmembrane protein 151 homolog of Caenorhabditis elegans.